The following is a 703-amino-acid chain: Solute carrier family 28 member 3 (703 aa).

Residues 1-19 (MSRADPGKNSEPSESKMSL) are compositionally biased toward basic and acidic residues. Residues 1–93 (MSRADPGKNS…DPEDDSEDEH (93 aa)) form a disordered region. Over 1–117 (MSRADPGKNS…FCRKHRVVLR (117 aa)) the chain is Cytoplasmic. Residues 44-61 (QNTPGNSTVRNRVVQSGE) are compositionally biased toward polar residues. A compositionally biased stretch (basic and acidic residues) spans 63 to 72 (GHAKQDDRQI). The helical transmembrane segment at 118–138 (STIWAVLLTGFLALVIAACAI) threads the bilayer. At 139–143 (NFHRA) the chain is on the extracellular side. Residues 144-164 (LPLFVITLVTIFFVIWDHLMA) traverse the membrane as a helical segment. Residues 165-188 (KYEQRIDDFLSPGRRLLDRHWFWL) lie on the Cytoplasmic side of the membrane. A helical membrane pass occupies residues 189-209 (KWVVWSSLILAIILWLSLDTA). Residues 210-212 (KLG) lie on the Extracellular side of the membrane. Residues 213-234 (QQNLVSFGGLIMYLILLFLFSK) form a helical membrane-spanning segment. At 235–242 (HPTRVYWR) the chain is on the cytoplasmic side. Residues 243–262 (PVFWGIGLQFLLGLLILRTR) form a helical membrane-spanning segment. Topologically, residues 263 to 299 (PGFVAFDWMGRQVQTFLGYTDTGARFVFGEKYTDHFF) are extracellular. The chain crosses the membrane as a helical span at residues 300-320 (AFKILPIVVFFSTVMSMLYYL). Over 321 to 344 (GLMQWIIRKVGWLMLVTMGSSPIE) the chain is Cytoplasmic. The segment at residues 345–363 (SVVAAGNIFIGQTESPLLV) is an intramembrane region (helical). Residues 364–376 (QPYLPHVTKSELH) lie on the Cytoplasmic side of the membrane. The chain crosses the membrane as a helical span at residues 377–399 (TIMTAGFATIAGSVLGAYISFGV). The Extracellular portion of the chain corresponds to 400 to 401 (SS). A helical transmembrane segment spans residues 402 to 423 (THLLTASVMSAPAALAVAKLFW). The Cytoplasmic portion of the chain corresponds to 424–458 (PETEKPKITLKSAMKMENGDSRNLLEAASQGASSS). A helical membrane pass occupies residues 459-484 (IPLVANIAANLIAFLALLSFVNSALS). At 485–522 (WFGSMFNYPELSFELICSYIFMPFSFMMGVDWQDSFMV) the chain is on the extracellular side. An intramembrane region (helical) is located at residues 523 to 542 (AKLIGYKTFFNEFVAYDHLS). Residues 543-581 (KLINLRKAAGPKFVNGVQQYMSIRSETIATYALCGFANF) lie on the Extracellular side of the membrane. A helical transmembrane segment spans residues 582 to 592 (GSLGIVIGGLT). Residues 593 to 605 (SIAPSRKRDIASG) lie on the Cytoplasmic side of the membrane. Residues 606-628 (AMRALIAGTIACFMTACIAGILS) form a helical membrane-spanning segment. The Extracellular portion of the chain corresponds to 629–703 (DTPVDINCHH…LNCNWIPNKL (75 aa)).

The protein belongs to the concentrative nucleoside transporter (CNT) (TC 2.A.41) family. In terms of assembly, homotrimer.

The protein localises to the cell membrane. The catalysed reaction is thymidine(out) + 2 Na(+)(out) = thymidine(in) + 2 Na(+)(in). It carries out the reaction cytidine(out) + 2 Na(+)(out) = cytidine(in) + 2 Na(+)(in). The enzyme catalyses uridine(out) + 2 Na(+)(out) = uridine(in) + 2 Na(+)(in). It catalyses the reaction adenosine(out) + 2 Na(+)(out) = adenosine(in) + 2 Na(+)(in). The catalysed reaction is guanosine(out) + 2 Na(+)(out) = guanosine(in) + 2 Na(+)(in). It carries out the reaction inosine(out) + 2 Na(+)(out) = inosine(in) + 2 Na(+)(in). Sodium-dependent, pyrimidine- and purine-selective. Involved in the homeostasis of endogenous nucleosides. Exhibits the transport characteristics of the nucleoside transport system cib or N3 subtype (N3/cib) (with marked transport of both thymidine and inosine). Employs a 2:1 sodium/nucleoside ratio. Also able to transport gemcitabine, 3'-azido-3'-deoxythymidine (AZT), ribavirin and 3-deazauridine. This is Solute carrier family 28 member 3 (Slc28a3) from Mus musculus (Mouse).